A 637-amino-acid chain; its full sequence is Threonine--tRNA ligase (637 aa).

One can recognise a TGS domain in the interval 1–61 (MIKVTLKDGK…DKDCNLEILT (61 aa)). The tract at residues 242–532 (DHRKIGKELD…LIEHYAGAFP (291 aa)) is catalytic. Residues cysteine 333, histidine 384, and histidine 509 each coordinate Zn(2+).

The protein belongs to the class-II aminoacyl-tRNA synthetase family. In terms of assembly, homodimer. Zn(2+) is required as a cofactor.

The protein resides in the cytoplasm. The catalysed reaction is tRNA(Thr) + L-threonine + ATP = L-threonyl-tRNA(Thr) + AMP + diphosphate + H(+). Its function is as follows. Catalyzes the attachment of threonine to tRNA(Thr) in a two-step reaction: L-threonine is first activated by ATP to form Thr-AMP and then transferred to the acceptor end of tRNA(Thr). Also edits incorrectly charged L-seryl-tRNA(Thr). In Clostridium acetobutylicum (strain ATCC 824 / DSM 792 / JCM 1419 / IAM 19013 / LMG 5710 / NBRC 13948 / NRRL B-527 / VKM B-1787 / 2291 / W), this protein is Threonine--tRNA ligase.